The sequence spans 486 residues: ATP synthase subunit beta, chloroplastic (486 aa).

154–161 is an ATP binding site; sequence GGAGVGKT.

It belongs to the ATPase alpha/beta chains family. As to quaternary structure, F-type ATPases have 2 components, CF(1) - the catalytic core - and CF(0) - the membrane proton channel. CF(1) has five subunits: alpha(3), beta(3), gamma(1), delta(1), epsilon(1). CF(0) has four main subunits: a(1), b(1), b'(1) and c(9-12).

It localises to the plastid. The protein resides in the chloroplast thylakoid membrane. The enzyme catalyses ATP + H2O + 4 H(+)(in) = ADP + phosphate + 5 H(+)(out). Its function is as follows. Produces ATP from ADP in the presence of a proton gradient across the membrane. The catalytic sites are hosted primarily by the beta subunits. In Dennstaedtia punctilobula (Hay-scented fern), this protein is ATP synthase subunit beta, chloroplastic.